Consider the following 183-residue polypeptide: CKLF-like MARVEL transmembrane domain-containing protein 6 (183 aa).

M1 is subject to N-acetylmethionine. Residues 1–39 (MENGAVYSPTTEEDPGPARGPRSGLAAYFFMGRLPLLRR) are Cytoplasmic-facing. At S8 the chain carries Phosphoserine. In terms of domain architecture, MARVEL spans 33–160 (RLPLLRRVLK…DFITMLYEKR (128 aa)). A helical transmembrane segment spans residues 40-60 (VLKGLQLLLSLLAFICEEVVS). Residues 61 to 67 (QCTLCGG) lie on the Extracellular side of the membrane. A helical transmembrane segment spans residues 68–88 (LYFFEFVSCSAFLLSLLILIV). Topologically, residues 89–106 (YCTPFYERVDTTKVKSSD) are cytoplasmic. Residues 107–127 (FYITLGTGCVFLLASIIFVST) form a helical membrane-spanning segment. Residues 128–134 (HDRTSAE) are Extracellular-facing. A helical membrane pass occupies residues 135-155 (IAAIVFGFIASFMFLLDFITM). Residues 156 to 183 (LYEKRQESQLRKPENTTRAEALTEPLNA) lie on the Cytoplasmic side of the membrane. A Phosphothreonine modification is found at T171.

Belongs to the chemokine-like factor family. Interacts with PD-L1/CD274 (via transmembrane domain); the interaction is direct. Interacts with CMTM4. Interacts with CD58, ARG1, ENO1 and TMPO. In terms of tissue distribution, expressed in the leukocytes, placenta and testis.

Its subcellular location is the cell membrane. It is found in the early endosome membrane. It localises to the recycling endosome membrane. Functionally, master regulator of recycling and plasma membrane expression of PD-L1/CD274, an immune inhibitory ligand critical for immune tolerance to self and antitumor immunity. Associates with both constitutive and IFNG-induced PD-L1/CD274 at recycling endosomes, where it protects PD-L1/CD274 from being targeted for lysosomal degradation, likely by preventing its STUB1-mediated ubiquitination. May stabilize PD-L1/CD274 expression on antigen presenting cells and potentiates inhibitory signaling by PDCD1/CD279, its receptor on T-cells, ultimately triggering T-cell anergy. This is CKLF-like MARVEL transmembrane domain-containing protein 6 from Homo sapiens (Human).